The following is a 313-amino-acid chain: Nodulation protein D 3 (313 aa).

Positions 6–63 (LDLNLLVALDALMTKRSVTAAARSINLSQPAMSSAIARLRSYFQDELFRMQGRELITT) constitute an HTH lysR-type domain. Residues 23-42 (VTAAARSINLSQPAMSSAIA) constitute a DNA-binding region (H-T-H motif).

The protein belongs to the LysR transcriptional regulatory family.

In terms of biological role, nodD regulates the expression of the nodABCFE genes which encode other nodulation proteins. NodD is also a negative regulator of its own expression. Binds flavonoids as inducers. In Rhizobium meliloti (strain 1021) (Ensifer meliloti), this protein is Nodulation protein D 3 (nodD3).